The chain runs to 317 residues: Aspartate carbamoyltransferase catalytic subunit (317 aa).

Carbamoyl phosphate contacts are provided by R66 and T67. K94 serves as a coordination point for L-aspartate. Positions 116, 144, and 147 each coordinate carbamoyl phosphate. Positions 177 and 231 each coordinate L-aspartate. Carbamoyl phosphate contacts are provided by G272 and P273.

This sequence belongs to the aspartate/ornithine carbamoyltransferase superfamily. ATCase family. In terms of assembly, heterododecamer (2C3:3R2) of six catalytic PyrB chains organized as two trimers (C3), and six regulatory PyrI chains organized as three dimers (R2).

It catalyses the reaction carbamoyl phosphate + L-aspartate = N-carbamoyl-L-aspartate + phosphate + H(+). It participates in pyrimidine metabolism; UMP biosynthesis via de novo pathway; (S)-dihydroorotate from bicarbonate: step 2/3. Catalyzes the condensation of carbamoyl phosphate and aspartate to form carbamoyl aspartate and inorganic phosphate, the committed step in the de novo pyrimidine nucleotide biosynthesis pathway. The polypeptide is Aspartate carbamoyltransferase catalytic subunit (Rhodopseudomonas palustris (strain BisB5)).